Consider the following 200-residue polypeptide: Diadenylate cyclase (200 aa).

A helical membrane pass occupies residues Ile5–Ala25. Positions Asn28–Asn185 constitute a DAC domain.

This sequence belongs to the adenylate cyclase family. DacB/CdaS subfamily. In terms of assembly, probably oligomerizes.

It is found in the cell membrane. The catalysed reaction is 2 ATP = 3',3'-c-di-AMP + 2 diphosphate. Functionally, catalyzes the condensation of 2 ATP molecules into cyclic di-AMP (c-di-AMP), a second messenger used to regulate differing processes in different bacteria. The sequence is that of Diadenylate cyclase from Mycoplasma genitalium (strain ATCC 33530 / DSM 19775 / NCTC 10195 / G37) (Mycoplasmoides genitalium).